A 230-amino-acid chain; its full sequence is DNA mismatch repair protein MutH (230 aa).

Belongs to the MutH family.

The protein localises to the cytoplasm. Its function is as follows. Sequence-specific endonuclease that cleaves unmethylated GATC sequences. It is involved in DNA mismatch repair. This is DNA mismatch repair protein MutH from Enterobacter sp. (strain 638).